We begin with the raw amino-acid sequence, 271 residues long: Na(+), Li(+), K(+)/H(+) antiporter subunit B (271 aa).

7 consecutive transmembrane segments (helical) span residues 2 to 22 (ILLTIFWDTLLDILPIAAIIF), 36 to 56 (LPQVLAGFFMVWVGLSLFLVG), 94 to 114 (WVYLFAFAIGASTTIAEPSLI), 130 to 150 (PFMLRIAVALGMAFGITLGTW), 152 to 172 (IVMGWPLQWFVFAAYCLVIIQ), 193 to 213 (STITVPIIAALGLGLAASIPG), and 216 to 236 (ALMDGFGMIALACLFPIITVM). The disordered stretch occupies residues 252-271 (TPHLSYSKAPPPSKGDNNAL).

This sequence belongs to the UmpA/UmpB family. As to quaternary structure, heterodimer composed of UmpA and UmpB.

The protein localises to the cell membrane. In terms of biological role, part of a two-component antiporter that catalyzes the efflux of Na(+), Li(+) and K(+) in exchange for external protons. Shows a preference for Na(+), followed by K(+) and Li(+). The sequence is that of Na(+), Li(+), K(+)/H(+) antiporter subunit B from Vreelandella zhaodongensis (Halomonas zhaodongensis).